A 38-amino-acid chain; its full sequence is Photosystem II reaction center protein L (38 aa).

The helical transmembrane segment at 17-37 threads the bilayer; sequence SLYWGLLLIFVLAVLFSSYIF.

It belongs to the PsbL family. In terms of assembly, PSII is composed of 1 copy each of membrane proteins PsbA, PsbB, PsbC, PsbD, PsbE, PsbF, PsbH, PsbI, PsbJ, PsbK, PsbL, PsbM, PsbT, PsbX, PsbY, PsbZ, Psb30/Ycf12, at least 3 peripheral proteins of the oxygen-evolving complex and a large number of cofactors. It forms dimeric complexes.

The protein localises to the plastid. It localises to the chloroplast thylakoid membrane. Its function is as follows. One of the components of the core complex of photosystem II (PSII). PSII is a light-driven water:plastoquinone oxidoreductase that uses light energy to abstract electrons from H(2)O, generating O(2) and a proton gradient subsequently used for ATP formation. It consists of a core antenna complex that captures photons, and an electron transfer chain that converts photonic excitation into a charge separation. This subunit is found at the monomer-monomer interface and is required for correct PSII assembly and/or dimerization. The chain is Photosystem II reaction center protein L from Tetradesmus obliquus (Green alga).